The primary structure comprises 180 residues: Dephospho-CoA kinase (180 aa).

Positions 2–180 (VIGVTGKIGT…VMKLVWEKRE (179 aa)) constitute a DPCK domain. 10-15 (GTGKST) provides a ligand contact to ATP.

The protein belongs to the CoaE family.

It is found in the cytoplasm. It catalyses the reaction 3'-dephospho-CoA + ATP = ADP + CoA + H(+). It participates in cofactor biosynthesis; coenzyme A biosynthesis; CoA from (R)-pantothenate: step 5/5. Its function is as follows. Catalyzes the phosphorylation of the 3'-hydroxyl group of dephosphocoenzyme A to form coenzyme A. The sequence is that of Dephospho-CoA kinase from Thermotoga maritima (strain ATCC 43589 / DSM 3109 / JCM 10099 / NBRC 100826 / MSB8).